The sequence spans 191 residues: MVNGNITFDDYLGLQQCLVEWADSYDSKDWSRLRKCIAPTLRIDYRSFLDKLWEAMPAEEFIAMISDKAVLGDPLLMTQHFIGGTKWEKISDTEVVGVHQLRVPHQRYTDETRSTVAVKGHAHSTNTHWYRKVNGEWKFAGLCPEIRWGEFDFDKVFASGREAFGTEDTAAEGISAKHQQQQHGRVTVSAV.

Substrate contacts are provided by tyrosine 25, tyrosine 45, and phenylalanine 48. Catalysis depends on residues histidine 80 and histidine 105. Asparagine 126 is a binding site for substrate.

This sequence belongs to the scytalone dehydratase family. As to quaternary structure, homotrimer. Each subunit contains an active site, located in the central part of the hydrophobic core of the monomer, which functions independently.

The protein resides in the endosome. It catalyses the reaction scytalone = 1,3,8-trihydroxynaphthalene + H2O. It functions in the pathway pigment biosynthesis; melanin biosynthesis. Functionally, scytalone dehydratase involved the biosynthesis of dihydroxynaphthalene (DHN)-melanin, a bluish-green pigment forming a dark layer in the conidial wall that protects the conidia from UV radiations. The first step of the pathway is the production of the pentaketide 1,3,6,8-tetrahydroxynaphthalene (1,3,6,8-THN or T4HN) by the polyketide synthase PfmaE though condensation of acetyl-CoA with malonyl-CoA. T4HN is not stable and easily oxidizes into the stable form flaviolin. T4HN is also substrate of the hydroxynaphthalene reductase PfmaG to yield scytalone. The scytalone dehydratase PfmaJ then reduces scytalone to 1,3,8-THN. 1,3,8-THN is then substrate of the hydroxynaphthalene reductase PfmaI to yield vermelone. Vermelone is further converted by the multicopper oxidase PfmaD to 1,8-DHN. Finally the laccase PFICI_06862 transforms 1,8-DHN to DHN-melanin. The roles of the 5-oxoprolinase PfmaA and the proline iminopeptidase PfmaB within the cluster have not been elucidated yet. This chain is Scytalone dehydratase PfmaJ, found in Pestalotiopsis fici (strain W106-1 / CGMCC3.15140).